The sequence spans 284 residues: Probable endonuclease 4 (284 aa).

Zn(2+)-binding residues include His-69, His-109, Glu-145, Asp-179, His-182, His-216, Asp-229, His-231, and Glu-261.

The protein belongs to the AP endonuclease 2 family. The cofactor is Zn(2+).

The catalysed reaction is Endonucleolytic cleavage to 5'-phosphooligonucleotide end-products.. In terms of biological role, endonuclease IV plays a role in DNA repair. It cleaves phosphodiester bonds at apurinic or apyrimidinic (AP) sites, generating a 3'-hydroxyl group and a 5'-terminal sugar phosphate. The chain is Probable endonuclease 4 from Klebsiella pneumoniae subsp. pneumoniae (strain ATCC 700721 / MGH 78578).